A 150-amino-acid chain; its full sequence is Large ribosomal subunit protein bL9 (150 aa).

It belongs to the bacterial ribosomal protein bL9 family.

Functionally, binds to the 23S rRNA. The sequence is that of Large ribosomal subunit protein bL9 from Paraburkholderia phymatum (strain DSM 17167 / CIP 108236 / LMG 21445 / STM815) (Burkholderia phymatum).